Consider the following 198-residue polypeptide: dITP/XTP pyrophosphatase (198 aa).

Ser-9–Lys-14 contacts substrate. Positions 41 and 70 each coordinate Mg(2+). The active-site Proton acceptor is Asp-70. Residues Ser-71, Phe-153–Asp-156, Lys-176, and His-181–Arg-182 contribute to the substrate site.

Belongs to the HAM1 NTPase family. As to quaternary structure, homodimer. It depends on Mg(2+) as a cofactor.

It catalyses the reaction XTP + H2O = XMP + diphosphate + H(+). The catalysed reaction is dITP + H2O = dIMP + diphosphate + H(+). It carries out the reaction ITP + H2O = IMP + diphosphate + H(+). Functionally, pyrophosphatase that catalyzes the hydrolysis of nucleoside triphosphates to their monophosphate derivatives, with a high preference for the non-canonical purine nucleotides XTP (xanthosine triphosphate), dITP (deoxyinosine triphosphate) and ITP. Seems to function as a house-cleaning enzyme that removes non-canonical purine nucleotides from the nucleotide pool, thus preventing their incorporation into DNA/RNA and avoiding chromosomal lesions. This chain is dITP/XTP pyrophosphatase, found in Aromatoleum aromaticum (strain DSM 19018 / LMG 30748 / EbN1) (Azoarcus sp. (strain EbN1)).